We begin with the raw amino-acid sequence, 586 residues long: MRKTKIVCTIGPASESEEMLEKLIKAGMNVARLNFSHGDQAEHKARIDTIRKVSKRLGKTVAILLDTKGPEIRTHNMKDGLIELEKGSEVTVSMTEVEGTPEKFSVTYENLINDVEEGSYILLDDGLIELQVKSIDKANGEVLCDVLNTGELKNKKGVNLPGVKVSLPGITDKDADDINFGISEGVDFIAASFVRRPSDVLDIRKLLEAKQNKNISIIPKIENQEGIDNIKEILEVSDGLMVARGDMGVEIPPESVPMVQKDLIRQCNKLGKPVITATQMLDSMQRNPRATRAEASDVANAIYDGTDAVMLSGETAAGQYPEEAVKTMRNIAVSAEAAQDYKKLLSDRTKLVETSLVNAIGVSVAHTALNLNVKAIVAATESGSTARTISKYRPQSDIIAVTPNAETARQCALVWGIFPVVKEGRKTTDALLNNAVATAVETERVQNGDLIIITAGVPTGEKGTTNMMKLHLVGDELAKGQGIGRSSVVGKTLVVKDASELEGKDLSESIIVTSSVDETLVPYIENAIGLITEENGITSPSAIIGLEKGIPTVVGVENATSEIQSDVLITVDANQGKIFEGYANVL.

Arg32 is a substrate binding site. The K(+) site is built by Asn34, Ser36, Asp66, and Thr67. An ATP-binding site is contributed by 34-37 (NFSH). Residues Arg73 and Lys156 each coordinate ATP. Position 222 (Glu222) interacts with Mg(2+). Residues Gly245, Asp246, and Thr278 each contribute to the substrate site. Asp246 is a binding site for Mg(2+).

This sequence belongs to the pyruvate kinase family. It in the C-terminal section; belongs to the PEP-utilizing enzyme family. Mg(2+) serves as cofactor. It depends on K(+) as a cofactor.

The catalysed reaction is pyruvate + ATP = phosphoenolpyruvate + ADP + H(+). Its pathway is carbohydrate degradation; glycolysis; pyruvate from D-glyceraldehyde 3-phosphate: step 5/5. The chain is Pyruvate kinase (pyk) from Staphylococcus saprophyticus subsp. saprophyticus (strain ATCC 15305 / DSM 20229 / NCIMB 8711 / NCTC 7292 / S-41).